The sequence spans 356 residues: Protein-arginine kinase (356 aa).

Residues 22 to 249 enclose the Phosphagen kinase C-terminal domain; that stretch reads FRPISTLSLS…SKILSAETEA (228 aa). Residues 25–29, 172–176, and 202–207 contribute to the ATP site; these read ISTLS, VARAF, and SSLLPL.

It belongs to the ATP:guanido phosphotransferase family.

The catalysed reaction is L-arginyl-[protein] + ATP = N(omega)-phospho-L-arginyl-[protein] + ADP + H(+). Its function is as follows. Catalyzes the specific phosphorylation of arginine residues in proteins. This chain is Protein-arginine kinase, found in Chlamydia muridarum (strain MoPn / Nigg).